The primary structure comprises 114 residues: Flagellar hook-basal body complex protein FliE (114 aa).

The protein belongs to the FliE family.

Its subcellular location is the bacterial flagellum basal body. This chain is Flagellar hook-basal body complex protein FliE, found in Burkholderia multivorans (strain ATCC 17616 / 249).